Consider the following 285-residue polypeptide: uncharacterized protein (285 aa).

The segment at 1–25 (MANQKKKTLPPQHQNQQPGFEYLMD) is disordered. NADP(+) is bound at residue 45-69 (IITGGDSGIGRAVSVLFAKEGANVV). Ser177 is a substrate binding site. Tyr190 functions as the Proton acceptor in the catalytic mechanism.

It belongs to the short-chain dehydrogenases/reductases (SDR) family.

This is an uncharacterized protein from Bacillus subtilis (strain 168).